Reading from the N-terminus, the 706-residue chain is Protein kinase C theta type (706 aa).

Residues 1-107 (MSPFLRIGLS…KNNGKTEIWL (107 aa)) form the C2 domain. The residue at position 90 (Tyr-90) is a Phosphotyrosine; by LCK. The segment at 159-209 (CHEFTATFFPQPTFCSVCHEFVWGLNKQGYQCRQCNAAIHKKCIDKVIAKC) adopts a Phorbol-ester/DAG-type 1 zinc-finger fold. At Thr-219 the chain carries Phosphothreonine; by autocatalysis. The Phorbol-ester/DAG-type 2 zinc finger occupies 231-281 (PHRFKVYNYKSPTFCEHCGTLLWGLARQGLKCDACGMNVHHRCQTKVANLC). Ser-348 is modified (phosphoserine). In terms of domain architecture, Protein kinase spans 380 to 634 (FILHKMLGKG…RGDIRQHPLF (255 aa)). ATP-binding positions include 386 to 394 (LGKGSFGKV) and Lys-409. Asp-504 functions as the Proton acceptor in the catalytic mechanism. At Thr-538 the chain carries Phosphothreonine; by PDPK1. The AGC-kinase C-terminal domain occupies 635–706 (REINWEELER…MNPGMERLIS (72 aa)). Ser-676, Ser-685, and Ser-695 each carry phosphoserine.

Belongs to the protein kinase superfamily. AGC Ser/Thr protein kinase family. PKC subfamily. As to quaternary structure, part of a lipid raft complex composed at least of BCL10, CARD11, MALT1 and IKBKB. Interacts with GLRX3 (via N-terminus). Interacts with ECT2. Interacts with CCDC88A/GIV; the interaction leads to phosphorylation of CCDC88A and inhibition of its guanine nucleotide exchange factor activity. Interacts with PRKCH upstream open reading frame 2; the interaction leads to inhibition of kinase activity. Interacts with CD28. Mg(2+) serves as cofactor. Post-translationally, autophosphorylation at Thr-219 is required for targeting to the TCR and cellular function of PRKCQ upon antigen receptor ligation. Following TCR stimulation, phosphorylated at Tyr-90 and Ser-685. Expressed in skeletal muscle, T-cells, megakaryoblastic cells and platelets.

The protein resides in the cytoplasm. Its subcellular location is the cell membrane. The catalysed reaction is L-seryl-[protein] + ATP = O-phospho-L-seryl-[protein] + ADP + H(+). It carries out the reaction L-threonyl-[protein] + ATP = O-phospho-L-threonyl-[protein] + ADP + H(+). With respect to regulation, novel PKCs (PRKCD, PRKCE, PRKCH and PRKCQ) are calcium-insensitive, but activated by diacylglycerol (DAG) and phosphatidylserine. Three specific sites; Thr-538 (activation loop of the kinase domain), Ser-676 (turn motif) and Ser-695 (hydrophobic region), need to be phosphorylated for its full activation. Inhibited by PRKCH upstream open reading frame 2. In terms of biological role, calcium-independent, phospholipid- and diacylglycerol (DAG)-dependent serine/threonine-protein kinase that mediates non-redundant functions in T-cell receptor (TCR) signaling, including T-cells activation, proliferation, differentiation and survival, by mediating activation of multiple transcription factors such as NF-kappa-B, JUN, NFATC1 and NFATC2. In TCR-CD3/CD28-co-stimulated T-cells, is required for the activation of NF-kappa-B and JUN, which in turn are essential for IL2 production, and participates in the calcium-dependent NFATC1 and NFATC2 transactivation. Mediates the activation of the canonical NF-kappa-B pathway (NFKB1) by direct phosphorylation of CARD11 on several serine residues, inducing CARD11 association with lipid rafts and recruitment of the BCL10-MALT1 complex, which then activates IKK complex, resulting in nuclear translocation and activation of NFKB1. May also play an indirect role in activation of the non-canonical NF-kappa-B (NFKB2) pathway. In the signaling pathway leading to JUN activation, acts by phosphorylating the mediator STK39/SPAK and may not act through MAP kinases signaling. Plays a critical role in TCR/CD28-induced NFATC1 and NFATC2 transactivation by participating in the regulation of reduced inositol 1,4,5-trisphosphate generation and intracellular calcium mobilization. After costimulation of T-cells through CD28 can phosphorylate CBLB and is required for the ubiquitination and subsequent degradation of CBLB, which is a prerequisite for the activation of TCR. During T-cells differentiation, plays an important role in the development of T-helper 2 (Th2) cells following immune and inflammatory responses, and, in the development of inflammatory autoimmune diseases, is necessary for the activation of IL17-producing Th17 cells. May play a minor role in Th1 response. Upon TCR stimulation, mediates T-cell protective survival signal by phosphorylating BAD, thus protecting T-cells from BAD-induced apoptosis, and by up-regulating BCL-X(L)/BCL2L1 levels through NF-kappa-B and JUN pathways. In platelets, regulates signal transduction downstream of the ITGA2B, CD36/GP4, F2R/PAR1 and F2RL3/PAR4 receptors, playing a positive role in 'outside-in' signaling and granule secretion signal transduction. May relay signals from the activated ITGA2B receptor by regulating the uncoupling of WASP and WIPF1, thereby permitting the regulation of actin filament nucleation and branching activity of the Arp2/3 complex. May mediate inhibitory effects of free fatty acids on insulin signaling by phosphorylating IRS1, which in turn blocks IRS1 tyrosine phosphorylation and downstream activation of the PI3K/AKT pathway. Phosphorylates MSN (moesin) in the presence of phosphatidylglycerol or phosphatidylinositol. Phosphorylates PDPK1 at 'Ser-504' and 'Ser-532' and negatively regulates its ability to phosphorylate PKB/AKT1. Phosphorylates CCDC88A/GIV and inhibits its guanine nucleotide exchange factor activity. Phosphorylates and activates LRRK1, which phosphorylates RAB proteins involved in intracellular trafficking. The protein is Protein kinase C theta type (PRKCQ) of Homo sapiens (Human).